The chain runs to 1044 residues: R3H domain-containing protein 2 (1044 aa).

Disordered stretches follow at residues 23–71 (EESV…AKSN) and 106–147 (SCPS…QEYT). Residues 36–56 (PSKEDVEKEGEENGLRQETQR) show a composition bias toward basic and acidic residues. S37 is subject to Phosphoserine. A compositionally biased stretch (basic residues) spans 58-71 (TSSHGHARKRAKSN). Positions 109 to 143 (SDKEEEKSTKDVSEKEDKDKSKEKVPRKMLSRDSS) are enriched in basic and acidic residues. The residue at position 143 (S143) is a Phosphoserine. An R3H domain is found at 169–232 (RMMLLKLEQE…AVIINKTSST (64 aa)). An SUZ domain is found at 233 to 303 (RIPEQRFSEH…VRERIFARET (71 aa)). 2 stretches are compositionally biased toward basic and acidic residues: residues 261 to 270 (DASMDRDDNQ) and 277 to 288 (DGRRSKSIEERE). Disordered stretches follow at residues 261–288 (DASM…EERE), 320–408 (SSSS…LSRP), 433–485 (CTAQ…FSPS), 502–533 (MAED…LFQP), 551–600 (GQPL…SNQQ), 729–770 (GTSP…SPSG), and 807–848 (GQKP…SLSN). Residues 338 to 349 (SRTSSSRQSSTD) show a composition bias toward low complexity. 3 positions are modified to phosphoserine: S362, S365, and S381. The segment covering 433 to 449 (CTAQQQQQQQQQQQQLP) has biased composition (low complexity). 2 stretches are compositionally biased toward polar residues: residues 509–521 (PFGQ…QGST) and 554–572 (LPTS…QQVL). The segment covering 757-770 (PQMSQQYSGVSPSG) has biased composition (low complexity). Residues 818–848 (GSPQANAQMGSSPVTSPTQSPAPSPVTSLSN) show a composition bias toward polar residues. A phosphoserine mark is found at S921 and S923. Phosphothreonine occurs at positions 924 and 928.

Its subcellular location is the nucleus. The polypeptide is R3H domain-containing protein 2 (R3hdm2) (Mus musculus (Mouse)).